We begin with the raw amino-acid sequence, 228 residues long: MWPPNAENNHCNYSYHEHAELNPHDHYHHHHYPHSSVHHTECYQTLSCPSDLPVETSYYNSVPPSYQDLGQTDLSPQFWCAEVDCVHERCSTKEIPHEQSKIFEEISKECDHIMNSAGDCEKCQVEHENGAQEAIPINDLVDIVMQTVDNLKKEGSSNDETKLLSRKRQQNKVAAARYRDKQKAKWQDLLDQLEAEEDRNQRLKLQAGHLEKEVAEMRQAFLAKLAKK.

The tract at residues 166 to 202 (RKRQQNKVAAARYRDKQKAKWQDLLDQLEAEEDRNQR) is basic motif. One can recognise a bZIP domain in the interval 166–224 (RKRQQNKVAAARYRDKQKAKWQDLLDQLEAEEDRNQRLKLQAGHLEKEVAEMRQAFLAK). The tract at residues 203–210 (LKLQAGHL) is leucine-zipper.

This sequence belongs to the bZIP family. As to quaternary structure, interacts with CCAAT/enhancer-binding protein cebp-2.

The protein localises to the nucleus. Its function is as follows. Transcription factor. Involved in modulating innate immune response pathways, acting to promote resistance against infection by Gram-negative bacterium P.aeruginosa strain PA14. May act as part of a feedback regulatory loop with the pmk-1/p38 MAPK pathway. May also function in concert with CCAAT/enhancer-binding protein cebp-2 to mediate immune responses, independently of the pmk-1/p38 MAPK pathway. The sequence is that of Transcription factor zip-11 from Caenorhabditis elegans.